A 585-amino-acid polypeptide reads, in one-letter code: Squalene epoxidase 2, mitochondrial (585 aa).

A mitochondrion-targeting transit peptide spans 1–45 (MKPFVIRNLPRFQSTLRSSLLYTNHRPSSRFSLSTRRFTTGATYI). Residues 70–90 (AKIALDQFIASLFTFLLLYIL) traverse the membrane as a helical segment. Residues 132 to 133 (VA), 152 to 153 (ER), R160, R231, V247, D409, and M422 contribute to the FAD site. A run of 3 helical transmembrane segments spans residues 493–513 (FDYLSLGGVFSSGPVALLSGL), 520–540 (LVLHFFAVAIYAVCRLMLPFP), and 545–565 (FWLGARIISSASSIIFPIIKA).

It belongs to the squalene monooxygenase family. FAD serves as cofactor. Expressed mainly in inflorescences. Detected in seedlings, leaves, stems, and siliques.

Its subcellular location is the mitochondrion membrane. The catalysed reaction is squalene + reduced [NADPH--hemoprotein reductase] + O2 = (S)-2,3-epoxysqualene + oxidized [NADPH--hemoprotein reductase] + H2O + H(+). The protein operates within terpene metabolism; lanosterol biosynthesis; lanosterol from farnesyl diphosphate: step 2/3. Catalyzes the stereospecific oxidation of squalene to (S)-2,3-epoxysqualene, and is considered to be a rate-limiting enzyme in steroid biosynthesis. Produces primarily oxidosqualene. The polypeptide is Squalene epoxidase 2, mitochondrial (SQE2) (Arabidopsis thaliana (Mouse-ear cress)).